The following is a 620-amino-acid chain: MLSAIYTVLAGLLFLPLLVNLCCPYFFQDIGYFLKVAAVGRRVRSYGKRRPARTILRAFLEKARQTPHKPFLLFRDETLTYAQVDRRSNQVARALHDHLGLRQGDCVALLMGNEPAYVWLWLGLVKLGCAMACLNYNIRAKSLLHCFQCCGAKVLLVSPELQAAVEEILPSLKKDDVSIYYVSRTSNTDGIDSFLDKVDEVSTEPIPESWRSEVTFSTPALYIYTSGTTGLPKAAMITHQRIWYGTGLTFVSGLKADDVIYITLPFYHSAALLIGIHGCIVAGATLALRTKFSASQFWDDCRKYNVTVIQYIGELLRYLCNSPQKPNDRDHKVRLALGNGLRGDVWRQFVKRFGDICIYEFYAATEGNIGFMNYARKVGAVGRVNYLQKKIITYDLIKYDVEKDEPVRDENGYCVRVPKGEVGLLVCKITQLTPFNGYAGAKAQTEKKKLRDVFKKGDLYFNSGDLLMVDHENFIYFHDRVGDTFRWKGENVATTEVADTVGLVDFVQEVNVYGVHVPDHEGRIGMASIKMKENHEFDGKKLFQHIADYLPSYARPRFLRIQDTIEITGTFKHRKMTLVEEGFNPAVIKDALYFLDDTAKMYVPMTEDIYNAISAKTLKL.

The Lumenal segment spans residues 1-4 (MLSA). A helical transmembrane segment spans residues 5 to 27 (IYTVLAGLLFLPLLVNLCCPYFF). The Cytoplasmic segment spans residues 28–106 (QDIGYFLKVA…DHLGLRQGDC (79 aa)). The chain crosses the membrane as a helical span at residues 107 to 127 (VALLMGNEPAYVWLWLGLVKL). Topologically, residues 128-261 (GCAMACLNYN…SGLKADDVIY (134 aa)) are lumenal. 222-233 (YIYTSGTTGLPK) is a binding site for AMP. The chain crosses the membrane as a helical span at residues 262-282 (ITLPFYHSAALLIGIHGCIVA). Residues 283-620 (GATLALRTKF…NAISAKTLKL (338 aa)) are Cytoplasmic-facing. Lys291 bears the N6-acetyllysine mark. Phosphothreonine is present on Thr577.

It belongs to the ATP-dependent AMP-binding enzyme family. In terms of tissue distribution, expressed in liver, kidney, placenta, intestine, brain, heart, and colon. Predominantly expressed in liver. Expressed in liver, placenta, and intestine, but much lower relative to isoform 1.

It localises to the endoplasmic reticulum membrane. The protein resides in the peroxisome membrane. Its subcellular location is the cell membrane. The protein localises to the microsome. It catalyses the reaction a fatty acid(in) = a fatty acid(out). It carries out the reaction (9Z)-octadecenoate(out) = (9Z)-octadecenoate(in). The catalysed reaction is a long-chain fatty acid + ATP + CoA = a long-chain fatty acyl-CoA + AMP + diphosphate. The enzyme catalyses (5Z,8Z,11Z,14Z)-eicosatetraenoate + ATP + CoA = (5Z,8Z,11Z,14Z)-eicosatetraenoyl-CoA + AMP + diphosphate. It catalyses the reaction hexadecanoate + ATP + CoA = hexadecanoyl-CoA + AMP + diphosphate. It carries out the reaction (9Z)-octadecenoate + ATP + CoA = (9Z)-octadecenoyl-CoA + AMP + diphosphate. The catalysed reaction is 3,7,11,15-tetramethylhexadecanoate + ATP + CoA = phytanoyl-CoA + AMP + diphosphate. The enzyme catalyses (9Z,12Z,15Z)-octadecatrienoate + ATP + CoA = (9Z,12Z,15Z)-octadecatrienoyl-CoA + AMP + diphosphate. It catalyses the reaction 2,6,10,14-tetramethylpentadecanoate + ATP + CoA = pristanoyl-CoA + AMP + diphosphate. It carries out the reaction (E)-hexadec-2-enoate + ATP + CoA = (2E)-hexadecenoyl-CoA + AMP + diphosphate. The catalysed reaction is a very long-chain fatty acid + ATP + CoA = a very long-chain fatty acyl-CoA + AMP + diphosphate. The enzyme catalyses tetracosanoate + ATP + CoA = tetracosanoyl-CoA + AMP + diphosphate. It catalyses the reaction (4Z,7Z,10Z,13Z,16Z,19Z)-docosahexaenoate + ATP + CoA = (4Z,7Z,10Z,13Z,16Z,19Z)-docosahexaenoyl-CoA + AMP + diphosphate. It carries out the reaction (25R)-3alpha,7alpha,12alpha-trihydroxy-5beta-cholestan-26-oate + ATP + CoA = (25R)-3alpha,7alpha,12alpha-trihydroxy-5beta-cholestan-26-oyl-CoA + AMP + diphosphate. Mediates the import of long-chain fatty acids (LCFA) into the cell by facilitating their transport across cell membranes, playing an important role in hepatic fatty acid uptake. Also functions as an acyl-CoA ligase catalyzing the ATP-dependent formation of fatty acyl-CoA using LCFA and very-long-chain fatty acids (VLCFA) as substrates, which prevents fatty acid efflux from cells and might drive more fatty acid uptake. Plays a pivotal role in regulating available LCFA substrates from exogenous sources in tissues undergoing high levels of beta-oxidation or triglyceride synthesis. Can also activate branched-chain fatty acids such as phytanic acid and pristanic acid. May contribute to the synthesis of sphingosine-1-phosphate. Does not activate C24 bile acids, cholate and chenodeoxycholate. In vitro, activates 3-alpha,7-alpha,12-alpha-trihydroxy-5-beta-cholestanate (THCA), the C27 precursor of cholic acid deriving from the de novo synthesis from cholesterol. However, it is not critical for THCA activation and bile synthesis in vivo. Functionally, exhibits both long-chain fatty acids (LCFA) transport activity and acyl CoA synthetase towards very long-chain fatty acids. Shows a preference for generating CoA derivatives of n-3 fatty acids, which are preferentially trafficked into phosphatidylinositol. In terms of biological role, exhibits long-chain fatty acids (LCFA) transport activity but lacks acyl CoA synthetase towards very long-chain fatty acids. This chain is Long-chain fatty acid transport protein 2 (SLC27A2), found in Homo sapiens (Human).